The sequence spans 100 residues: UPF0213 protein YhbQ (100 aa).

A GIY-YIG domain is found at 2–77 (TPWFLYLIRT…KQLTKRQKER (76 aa)).

The protein belongs to the UPF0213 family.

This is UPF0213 protein YhbQ from Escherichia coli O139:H28 (strain E24377A / ETEC).